Consider the following 1430-residue polypeptide: Bromodomain-containing protein homolog (1430 aa).

Residues 23–49 (FACPVRGCDRSYKTIMGLQYHLMKYDH) form a C2H2-type zinc finger. Residues 51-111 (NPQPLTPVLT…AGGGSASGVS (61 aa)) are disordered. A compositionally biased stretch (basic residues) spans 62-81 (SRKKARSRSGGHHSTPRPHK). Residues 283–333 (DAVCCICLDGECQNTNVILFCDMCNLAVHQDCYGVPYIPEGQWLCRRCLQS) form a PHD-type 1 zinc finger. Positions 286, 289, 303, 306, 311, 314, 327, and 330 each coordinate Zn(2+). A C2HC pre-PHD-type zinc finger spans residues 337–370 (PVNCVLCPNAGGAFKQTDHGQWAHVVCALWIPEV). The PHD-type 2 zinc finger occupies 394 to 457 (LTCYVCKEKG…QKFAYCHAHT (64 aa)). The region spanning 611 to 715 (LQLNPLEAAL…DQAAPLFVQV (105 aa)) is the Bromo domain. Residues 796–805 (KARFAARHSS) show a composition bias toward basic residues. Disordered regions lie at residues 796-887 (KARF…SSPV), 901-942 (AQAA…TTAA), 1012-1054 (ANLP…QALP), and 1076-1301 (QRDV…GQKP). Positions 842 to 857 (HDDDDEEEDSDEDSMG) are enriched in acidic residues. Positions 865-887 (LLNSTQTPPCSPIKSLNNSSSPV) are enriched in polar residues. 3 stretches are compositionally biased toward low complexity: residues 922–942 (NSQS…TTAA), 1034–1043 (SSSMSPKKSP), and 1085–1107 (APSQ…SCSD). Positions 1108–1120 (FDSDEASEGDADG) are enriched in acidic residues. Positions 1121–1137 (DPDRDGGRSRSEERDST) are enriched in basic and acidic residues. Composition is skewed to polar residues over residues 1151–1165 (ASLN…NMAI) and 1265–1278 (NTTA…TNNN). Residues 1281 to 1293 (KHSEDSASSERHN) show a composition bias toward basic and acidic residues. Residues 1305–1378 (PLQLVWAKCR…TWQWLPANKL (74 aa)) form the PWWP domain.

As to quaternary structure, component of the Enok complex composed of at least Br140, enok, Eaf6 and Ing5. As part of the Enok complex, interacts with elg1 and the Elg1 RFC-like complex.

Its subcellular location is the nucleus. Scaffold subunit of the histone acetyltransferase (HAT) Enok complex which has histone H3 acetyltransferase activity. As part of the Enok complex, associates with the Elg1 RFC-like complex and down-regulates its PCNA-unloading function to promote the G1/S transition. May also play a role in maintaining the protein levels and stability of enok. The chain is Bromodomain-containing protein homolog from Drosophila melanogaster (Fruit fly).